The primary structure comprises 102 residues: Co-chaperonin GroES (102 aa).

It belongs to the GroES chaperonin family. As to quaternary structure, heptamer of 7 subunits arranged in a ring. Interacts with the chaperonin GroEL.

Its subcellular location is the cytoplasm. In terms of biological role, together with the chaperonin GroEL, plays an essential role in assisting protein folding. The GroEL-GroES system forms a nano-cage that allows encapsulation of the non-native substrate proteins and provides a physical environment optimized to promote and accelerate protein folding. GroES binds to the apical surface of the GroEL ring, thereby capping the opening of the GroEL channel. The chain is Co-chaperonin GroES from Chlamydia felis (strain Fe/C-56) (Chlamydophila felis).